The primary structure comprises 177 residues: Large ribosomal subunit protein uL6 (177 aa).

The protein belongs to the universal ribosomal protein uL6 family. In terms of assembly, part of the 50S ribosomal subunit.

Functionally, this protein binds to the 23S rRNA, and is important in its secondary structure. It is located near the subunit interface in the base of the L7/L12 stalk, and near the tRNA binding site of the peptidyltransferase center. This chain is Large ribosomal subunit protein uL6, found in Rickettsia canadensis (strain McKiel).